Reading from the N-terminus, the 131-residue chain is Small ribosomal subunit protein uS8 (131 aa).

Belongs to the universal ribosomal protein uS8 family. In terms of assembly, part of the 30S ribosomal subunit. Contacts proteins S5 and S12.

Functionally, one of the primary rRNA binding proteins, it binds directly to 16S rRNA central domain where it helps coordinate assembly of the platform of the 30S subunit. This Aromatoleum aromaticum (strain DSM 19018 / LMG 30748 / EbN1) (Azoarcus sp. (strain EbN1)) protein is Small ribosomal subunit protein uS8.